We begin with the raw amino-acid sequence, 160 residues long: 2-C-methyl-D-erythritol 2,4-cyclodiphosphate synthase (160 aa).

The a divalent metal cation site is built by D11 and H13. Residues 11–13 (DVH) and 37–38 (HS) contribute to the 4-CDP-2-C-methyl-D-erythritol 2-phosphate site. H45 lines the a divalent metal cation pocket. Residues 59–61 (DIG), 64–68 (FPDTD), 135–138 (TTTE), F142, and R145 each bind 4-CDP-2-C-methyl-D-erythritol 2-phosphate.

This sequence belongs to the IspF family. Homotrimer. Requires a divalent metal cation as cofactor.

The enzyme catalyses 4-CDP-2-C-methyl-D-erythritol 2-phosphate = 2-C-methyl-D-erythritol 2,4-cyclic diphosphate + CMP. The protein operates within isoprenoid biosynthesis; isopentenyl diphosphate biosynthesis via DXP pathway; isopentenyl diphosphate from 1-deoxy-D-xylulose 5-phosphate: step 4/6. Its function is as follows. Involved in the biosynthesis of isopentenyl diphosphate (IPP) and dimethylallyl diphosphate (DMAPP), two major building blocks of isoprenoid compounds. Catalyzes the conversion of 4-diphosphocytidyl-2-C-methyl-D-erythritol 2-phosphate (CDP-ME2P) to 2-C-methyl-D-erythritol 2,4-cyclodiphosphate (ME-CPP) with a corresponding release of cytidine 5-monophosphate (CMP). This chain is 2-C-methyl-D-erythritol 2,4-cyclodiphosphate synthase, found in Alcanivorax borkumensis (strain ATCC 700651 / DSM 11573 / NCIMB 13689 / SK2).